Here is a 514-residue protein sequence, read N- to C-terminus: F-box-like/WD repeat-containing protein TBL1XR1 (514 aa).

An N-acetylserine modification is found at Ser-2. The LisH domain occupies 4–36 (SSDEVNFLVYRYLQESGFSHSAFTFGIESHISQ). The region spanning 41–86 (GALVPPAALISIIQKGLQYVEAEVSINEDGTLFDGRPIESLSLIDA) is the F-box-like domain. The residue at position 102 (Lys-102) is an N6-acetyllysine. Phosphoserine is present on Ser-119. Residues 120–135 (QQGSAKNGENTANGEE) are compositionally biased toward low complexity. Positions 120–139 (QQGSAKNGENTANGEENGAH) are disordered. WD repeat units lie at residues 167–206 (GHES…TSGS), 223–262 (PSNK…ASTL), 264–303 (QHKG…AKQQ), 306–344 (FHSA…PIKT), 347–386 (GHTN…CVHD), 389–437 (AHNK…CIHT), 440–479 (KHQE…LVHS), and 481–513 (RGTG…LDLR). Lys-277 is covalently cross-linked (Glycyl lysine isopeptide (Lys-Gly) (interchain with G-Cter in SUMO2)).

Belongs to the WD repeat EBI family. Component of the N-Cor repressor complex, at least composed of NCOR1, NCOR2, HDAC3, TBL1X, TBL1XR1, CORO2A and GPS2. Probable component of some E3 ubiquitin ligase complex. Interacts with histones H2B and H4. Interacts with MECP2; bridges interaction between MECP2 and NCOR1. Interacts with USP44. As to expression, widely expressed including the pituitary, hypothalamus, white and brown adipose tissue, muscle and liver.

It localises to the nucleus. Its function is as follows. F-box-like protein involved in the recruitment of the ubiquitin/19S proteasome complex to nuclear receptor-regulated transcription units. Plays an essential role in transcription activation mediated by nuclear receptors. Probably acts as integral component of the N-Cor corepressor complex that mediates the recruitment of the 19S proteasome complex, leading to the subsequent proteasomal degradation of N-Cor complex, thereby allowing cofactor exchange, and transcription activation. This Homo sapiens (Human) protein is F-box-like/WD repeat-containing protein TBL1XR1 (TBL1XR1).